The primary structure comprises 334 residues: Putative transport protein MJ1177 (334 aa).

7 helical membrane-spanning segments follow: residues 13–33 (VIVG…DVLA), 61–81 (LAIS…LLTF), 138–158 (IIDV…TFYF), 191–211 (SYKN…ILSY), 234–254 (LLPI…FFLI), 259–279 (KAVF…DFVI), and 293–313 (VLVV…GFAI).

The protein belongs to the autoinducer-2 exporter (AI-2E) (TC 2.A.86) family.

The protein localises to the cell membrane. The sequence is that of Putative transport protein MJ1177 from Methanocaldococcus jannaschii (strain ATCC 43067 / DSM 2661 / JAL-1 / JCM 10045 / NBRC 100440) (Methanococcus jannaschii).